The primary structure comprises 225 residues: Ribonuclease 3 (225 aa).

Positions 7–129 (IPRLCRTLGY…IIGAVYLDSD (123 aa)) constitute an RNase III domain. Residue glutamate 42 coordinates Mg(2+). Residue aspartate 46 is part of the active site. Residues aspartate 115 and glutamate 118 each contribute to the Mg(2+) site. Glutamate 118 is a catalytic residue. A DRBM domain is found at 155-225 (DPKTLLQELL…AAQALELIKR (71 aa)).

It belongs to the ribonuclease III family. As to quaternary structure, homodimer. Mg(2+) serves as cofactor.

Its subcellular location is the cytoplasm. The catalysed reaction is Endonucleolytic cleavage to 5'-phosphomonoester.. Functionally, digests double-stranded RNA. Involved in the processing of primary rRNA transcript to yield the immediate precursors to the large and small rRNAs (23S and 16S). Processes some mRNAs, and tRNAs when they are encoded in the rRNA operon. Processes pre-crRNA and tracrRNA of type II CRISPR loci if present in the organism. This is Ribonuclease 3 from Shewanella woodyi (strain ATCC 51908 / MS32).